The primary structure comprises 381 residues: Tryptophan--tRNA ligase (381 aa).

Positions 82 to 90 (PSLGMHIGH) match the 'HIGH' region motif. Residues 254-258 (KMSSS) carry the 'KMSKS' region motif.

The protein belongs to the class-I aminoacyl-tRNA synthetase family.

The protein resides in the cytoplasm. The enzyme catalyses tRNA(Trp) + L-tryptophan + ATP = L-tryptophyl-tRNA(Trp) + AMP + diphosphate + H(+). The chain is Tryptophan--tRNA ligase from Sulfolobus acidocaldarius (strain ATCC 33909 / DSM 639 / JCM 8929 / NBRC 15157 / NCIMB 11770).